Consider the following 303-residue polypeptide: Acetylglutamate kinase (303 aa).

Residues 73–74 (GG), R95, and N194 each bind substrate.

It belongs to the acetylglutamate kinase family. ArgB subfamily.

It is found in the cytoplasm. It catalyses the reaction N-acetyl-L-glutamate + ATP = N-acetyl-L-glutamyl 5-phosphate + ADP. It participates in amino-acid biosynthesis; L-arginine biosynthesis; N(2)-acetyl-L-ornithine from L-glutamate: step 2/4. Catalyzes the ATP-dependent phosphorylation of N-acetyl-L-glutamate. The sequence is that of Acetylglutamate kinase from Saccharopolyspora erythraea (strain ATCC 11635 / DSM 40517 / JCM 4748 / NBRC 13426 / NCIMB 8594 / NRRL 2338).